The primary structure comprises 341 residues: DER1-like family member protein 1 (341 aa).

Residues 1-41 are Cytoplasmic-facing; that stretch reads MAGPRNVRTLHGNGGRNNDVMGPKEFWLNIPPITRTLFTLA. The chain crosses the membrane as a helical span at residues 42 to 62; sequence IVMTIVGRLNLINPWYFIYVW. Residues 63–122 lie on the Lumenal side of the membrane; that stretch reads NLTFKKVQIWRLLTSCVMLSSRAMPALMELYSIYDRSSQLERGHFGPGLSNRRGPMVTVD. A helical membrane pass occupies residues 123–143; sequence YAYYLCFCILAITTATTIIYG. The Cytoplasmic segment spans residues 144–170; it reads SYYPVVLTSGFISCITYTWSIDNANVQ. A helical membrane pass occupies residues 171-191; sequence IMFYGLIPVWGKYFPLIQLFI. Serine 192 is a topological domain (lumenal). A helical transmembrane segment spans residues 193 to 213; the sequence is FVFNEGDFVISLIGFTTGYLY. The Cytoplasmic portion of the chain corresponds to 214-341; it reads TCLDTHTLGP…GQTNSPSDSQ (128 aa). 2 stretches are compositionally biased toward polar residues: residues 276–286 and 296–341; these read SSQRETRTFSG and ATLS…SDSQ. The segment at 276–341 is disordered; that stretch reads SSQRETRTFS…GQTNSPSDSQ (66 aa).

It belongs to the derlin family.

It localises to the endoplasmic reticulum membrane. In terms of biological role, may be involved in the degradation process of some misfolded endoplasmic reticulum (ER) luminal proteins. Its precise role is however unclear and its inability to complement der1 mutations, suggests either that it is not involved in degradation process of misfolded proteins, or that it participates in the destruction of specific misfolded ER luminal proteins. The protein is DER1-like family member protein 1 (DFM1) of Saccharomyces cerevisiae (strain ATCC 204508 / S288c) (Baker's yeast).